The primary structure comprises 182 residues: Adenine phosphoribosyltransferase (182 aa).

AMP is bound at residue 133-137 (ATGGS).

Belongs to the purine/pyrimidine phosphoribosyltransferase family. In terms of assembly, homodimer. It depends on Mg(2+) as a cofactor.

It is found in the cytoplasm. The protein resides in the nucleus. The catalysed reaction is AMP + diphosphate = 5-phospho-alpha-D-ribose 1-diphosphate + adenine. It functions in the pathway purine metabolism; AMP biosynthesis via salvage pathway; AMP from adenine: step 1/1. Catalyzes a salvage reaction resulting in the formation of AMP, that is energically less costly than de novo synthesis. In Yarrowia lipolytica (strain CLIB 122 / E 150) (Yeast), this protein is Adenine phosphoribosyltransferase (APT1).